Reading from the N-terminus, the 441-residue chain is Transforming protein p54/c-ets-1 (441 aa).

Residues 51–136 (ATFSGFAKEQ…EHLEILQKEE (86 aa)) enclose the PNT domain. The interval 130–243 (EILQKEEAKP…DNMCMGRASR (114 aa)) is activation domain; required for transcription activation. Residues 304 to 312 (FKDYVRDRA) form a helix HI-1 region. The segment at 323-330 (AAALAGYT) is helix HI-2. A DNA-binding region (ETS) is located at residues 335–415 (IQLWQFLLEL…AGKRYVYRFV (81 aa)). Residues 418 to 422 (LQSLL) form a helix H4 region. The interval 426-432 (PEELHAM) is helix H5.

The protein belongs to the ETS family. In terms of assembly, binds DNA as a homodimer; homodimerization is required for transcription activation.

Its subcellular location is the nucleus. The protein localises to the cytoplasm. With respect to regulation, autoinhibited by a module composed of four alpha helices (HI-1, HI-2, H4, and H5) that flank the DNA-binding ETS domain, reducing the affinity for DNA. Its function is as follows. Transcription factor. Directly controls the expression of cytokine and chemokine genes in a wide variety of different cellular contexts. The protein is Transforming protein p54/c-ets-1 (ETS1) of Gallus gallus (Chicken).